A 386-amino-acid polypeptide reads, in one-letter code: ABC transporter permease protein NatB (386 aa).

6 consecutive transmembrane segments (helical) span residues 19–39 (TILLTILVPMIMMLGLVFFYE), 172–192 (AIMLSAILPMLILTSIVSGAM), 226–246 (WLAVSTFGVASGVFALVFLIL), 273–293 (ALIIVLSALLISAMELFISIM), 300–320 (AQSYMSLVVFLPVFPMFFIFS), and 353–373 (ATILSTSGTIAVLIAIFFLLA).

The complex is composed of NatA and NatB.

The protein resides in the cell membrane. It carries out the reaction Na(+)(in) + ATP + H2O = Na(+)(out) + ADP + phosphate + H(+). Part of an ABC transporter that catalyzes ATP-dependent electrogenic sodium extrusion. In Bacillus subtilis (strain 168), this protein is ABC transporter permease protein NatB.